The sequence spans 651 residues: Protein EXECUTER 2, chloroplastic (651 aa).

The transit peptide at 1–69 (MATTQPCLIG…KAPSLSCLRN (69 aa)) directs the protein to the chloroplast. The UVR domain occupies 103–138 (ESVVSLLKSQLEDAVEKEDFEEAVKLKQAISEATVD). Residues 330 to 359 (DATEELVGEGTEETNSSDDEEEVEEEENDS) form a disordered region.

The protein localises to the plastid. It localises to the chloroplast. Functionally, together with EX1, enables higher plants to perceive singlet oxygen as a stress signal in plastid that activates a genetically determined nuclear stress response program which triggers a programmed cell death (PCD). This transfer of singlet oxygen-induced stress-related signals from the plastid to the nucleus that triggers genetically controlled PCD pathway is unique to photosynthetic eukaryotes and operates under mild stress conditions, impeding photosystem II (PSII) without causing photooxidative damage of the plant. This is Protein EXECUTER 2, chloroplastic from Arabidopsis thaliana (Mouse-ear cress).